We begin with the raw amino-acid sequence, 91 residues long: Small ribosomal subunit protein uS19 (91 aa).

The protein belongs to the universal ribosomal protein uS19 family.

Protein S19 forms a complex with S13 that binds strongly to the 16S ribosomal RNA. The polypeptide is Small ribosomal subunit protein uS19 (Cupriavidus pinatubonensis (strain JMP 134 / LMG 1197) (Cupriavidus necator (strain JMP 134))).